A 316-amino-acid chain; its full sequence is Porphobilinogen deaminase (316 aa).

At cysteine 245 the chain carries S-(dipyrrolylmethanemethyl)cysteine.

This sequence belongs to the HMBS family. As to quaternary structure, monomer. Dipyrromethane is required as a cofactor.

The catalysed reaction is 4 porphobilinogen + H2O = hydroxymethylbilane + 4 NH4(+). The protein operates within porphyrin-containing compound metabolism; protoporphyrin-IX biosynthesis; coproporphyrinogen-III from 5-aminolevulinate: step 2/4. Its pathway is porphyrin-containing compound metabolism; chlorophyll biosynthesis. Tetrapolymerization of the monopyrrole PBG into the hydroxymethylbilane pre-uroporphyrinogen in several discrete steps. This is Porphobilinogen deaminase from Synechococcus sp. (strain CC9311).